We begin with the raw amino-acid sequence, 138 residues long: Small ribosomal subunit protein bS6 (138 aa).

Residues 97-121 (TEQSEMLKAEENRSERRERRDRPDN) are compositionally biased toward basic and acidic residues. Residues 97-138 (TEQSEMLKAEENRSERRERRDRPDNTDGSNENDSDSDNNADE) form a disordered region. Over residues 126–138 (NENDSDSDNNADE) the composition is skewed to acidic residues.

It belongs to the bacterial ribosomal protein bS6 family.

In terms of biological role, binds together with bS18 to 16S ribosomal RNA. The polypeptide is Small ribosomal subunit protein bS6 (Stutzerimonas stutzeri (strain A1501) (Pseudomonas stutzeri)).